A 439-amino-acid polypeptide reads, in one-letter code: Xylose isomerase (439 aa).

Residues His-99 and Asp-102 contribute to the active site. Mg(2+) is bound by residues Glu-230, Glu-266, His-269, Asp-294, Asp-305, Asp-307, and Asp-337.

Belongs to the xylose isomerase family. Homotetramer. Requires Mg(2+) as cofactor.

Its subcellular location is the cytoplasm. It carries out the reaction alpha-D-xylose = alpha-D-xylulofuranose. The chain is Xylose isomerase from Shouchella clausii (strain KSM-K16) (Alkalihalobacillus clausii).